A 122-amino-acid chain; its full sequence is Large ribosomal subunit protein uL14 (122 aa).

It belongs to the universal ribosomal protein uL14 family. Part of the 50S ribosomal subunit. Forms a cluster with proteins L3 and L19. In the 70S ribosome, L14 and L19 interact and together make contacts with the 16S rRNA in bridges B5 and B8.

Functionally, binds to 23S rRNA. Forms part of two intersubunit bridges in the 70S ribosome. This chain is Large ribosomal subunit protein uL14, found in Rhodospirillum rubrum (strain ATCC 11170 / ATH 1.1.1 / DSM 467 / LMG 4362 / NCIMB 8255 / S1).